The primary structure comprises 393 residues: Sulfite oxidase (393 aa).

The interval 1–27 is disordered; it reads MPGIRGPSEYSQEPPRHPSLKVNAKEP. The interval 10–242 is moco domain; it reads YSQEPPRHPS…QGFFMQKDYK (233 aa). Residues 49–53, Cys98, 159–161, His202, Arg207, and 218–220 contribute to the Mo-molybdopterin site; these read YKRNH, SVD, and SVK. The tract at residues 243–393 is homodimerization; sequence MFPPSVNWDN…VLLRLGHSNL (151 aa). Residues 391 to 393 carry the Microbody targeting signal motif; it reads SNL.

Predominantly monomer; also homodimer. The cofactor is Mo-molybdopterin.

Its subcellular location is the peroxisome. The enzyme catalyses sulfite + O2 + H2O = sulfate + H2O2. It participates in energy metabolism; sulfur metabolism. Probably involved in sulfite oxidative detoxification. The chain is Sulfite oxidase (SOX) from Arabidopsis thaliana (Mouse-ear cress).